We begin with the raw amino-acid sequence, 835 residues long: Leucine--tRNA ligase (835 aa).

A 'HIGH' region motif is present at residues 42–52 (PYPSGRIHMGH). The 'KMSKS' region signature appears at 612–616 (KMSKS). Lysine 615 contributes to the ATP binding site.

Belongs to the class-I aminoacyl-tRNA synthetase family.

Its subcellular location is the cytoplasm. The enzyme catalyses tRNA(Leu) + L-leucine + ATP = L-leucyl-tRNA(Leu) + AMP + diphosphate. The polypeptide is Leucine--tRNA ligase (Rhizorhabdus wittichii (strain DSM 6014 / CCUG 31198 / JCM 15750 / NBRC 105917 / EY 4224 / RW1) (Sphingomonas wittichii)).